A 200-amino-acid polypeptide reads, in one-letter code: Somatotropin (200 aa).

Positions 1–22 are cleaved as a signal peptide; it reads MARVLVLLSVVVASLLFSQGAT. A Zn(2+)-binding site is contributed by His-38. A disulfide bridge links Cys-71 with Cys-173. Zn(2+) is bound at residue Glu-182. A disulfide bond links Cys-190 and Cys-198.

This sequence belongs to the somatotropin/prolactin family.

Its subcellular location is the secreted. Functionally, growth hormone plays an important role in growth control and is involved in the regulation of several anabolic processes. Implicated as an osmoregulatory substance important for seawater adaptation. This is Somatotropin (gh) from Ictalurus punctatus (Channel catfish).